The sequence spans 122 residues: MIPGEIRPKKGVIEINVGRATKKVLVANTGDRPIQVGSHFHFIEVNRFLEFNREDAIGMHLNIPSGTAVRFEPGEEKEVELVEFGGKQHVFGLNKLTEGSTHHKDEILDKAIEGGFKGAEEK.

It belongs to the urease beta subunit family. As to quaternary structure, heterotrimer of UreA (gamma), UreB (beta) and UreC (alpha) subunits. Three heterotrimers associate to form the active enzyme.

The protein resides in the cytoplasm. It catalyses the reaction urea + 2 H2O + H(+) = hydrogencarbonate + 2 NH4(+). It functions in the pathway nitrogen metabolism; urea degradation; CO(2) and NH(3) from urea (urease route): step 1/1. The sequence is that of Urease subunit beta from Lysinibacillus sphaericus (strain C3-41).